We begin with the raw amino-acid sequence, 490 residues long: Glutamyl-tRNA(Gln) amidotransferase subunit A (490 aa).

Catalysis depends on charge relay system residues K80 and S155. Residue S179 is the Acyl-ester intermediate of the active site.

It belongs to the amidase family. GatA subfamily. In terms of assembly, heterotrimer of A, B and C subunits.

It catalyses the reaction L-glutamyl-tRNA(Gln) + L-glutamine + ATP + H2O = L-glutaminyl-tRNA(Gln) + L-glutamate + ADP + phosphate + H(+). Allows the formation of correctly charged Gln-tRNA(Gln) through the transamidation of misacylated Glu-tRNA(Gln) in organisms which lack glutaminyl-tRNA synthetase. The reaction takes place in the presence of glutamine and ATP through an activated gamma-phospho-Glu-tRNA(Gln). The protein is Glutamyl-tRNA(Gln) amidotransferase subunit A of Brevibacillus brevis (strain 47 / JCM 6285 / NBRC 100599).